The sequence spans 53 residues: Light-harvesting protein B-800/820 alpha chain (53 aa).

At 1 to 14 (MNQGKIWTVVNPAV) the chain is on the cytoplasmic side. The chain crosses the membrane as a helical span at residues 15-35 (GLPLLLGSVAITALLVHLAVL). H31 contacts a bacteriochlorophyll. At 36 to 53 (THTTWFPAFTQGGLKKAA) the chain is on the periplasmic side.

Belongs to the antenna complex alpha subunit family. As to quaternary structure, the core complex is formed by different alpha and beta chains, binding bacteriochlorophyll molecules, and arranged most probably in tetrameric structures disposed around the reaction center. The non-pigmented gamma chains may constitute additional components.

The protein localises to the cell inner membrane. Functionally, antenna complexes are light-harvesting systems, which transfer the excitation energy to the reaction centers. The sequence is that of Light-harvesting protein B-800/820 alpha chain from Rhodoblastus acidophilus (Rhodopseudomonas acidophila).